Reading from the N-terminus, the 258-residue chain is tRNA pseudouridine synthase A (258 aa).

Asp52 acts as the Nucleophile in catalysis. Substrate is bound at residue Tyr111.

This sequence belongs to the tRNA pseudouridine synthase TruA family. As to quaternary structure, homodimer.

The catalysed reaction is uridine(38/39/40) in tRNA = pseudouridine(38/39/40) in tRNA. Formation of pseudouridine at positions 38, 39 and 40 in the anticodon stem and loop of transfer RNAs. The polypeptide is tRNA pseudouridine synthase A (Azorhizobium caulinodans (strain ATCC 43989 / DSM 5975 / JCM 20966 / LMG 6465 / NBRC 14845 / NCIMB 13405 / ORS 571)).